We begin with the raw amino-acid sequence, 402 residues long: Tryptophan synthase beta chain (402 aa).

Residue Lys91 is modified to N6-(pyridoxal phosphate)lysine.

This sequence belongs to the TrpB family. As to quaternary structure, tetramer of two alpha and two beta chains. The cofactor is pyridoxal 5'-phosphate.

It carries out the reaction (1S,2R)-1-C-(indol-3-yl)glycerol 3-phosphate + L-serine = D-glyceraldehyde 3-phosphate + L-tryptophan + H2O. The protein operates within amino-acid biosynthesis; L-tryptophan biosynthesis; L-tryptophan from chorismate: step 5/5. Functionally, the beta subunit is responsible for the synthesis of L-tryptophan from indole and L-serine. The protein is Tryptophan synthase beta chain (trpB) of Lactococcus lactis subsp. lactis (strain IL1403) (Streptococcus lactis).